Consider the following 182-residue polypeptide: Riboflavin kinase (182 aa).

Positions 39 and 41 each coordinate Mg(2+). The active-site Nucleophile is the E117.

Belongs to the flavokinase family. Requires Zn(2+) as cofactor. Mg(2+) is required as a cofactor.

The enzyme catalyses riboflavin + ATP = FMN + ADP + H(+). It functions in the pathway cofactor biosynthesis; FMN biosynthesis; FMN from riboflavin (ATP route): step 1/1. In terms of biological role, catalyzes the phosphorylation of riboflavin (vitamin B2) to form flavin mononucleotide (FMN) coenzyme. The chain is Riboflavin kinase (FMN1) from Lodderomyces elongisporus (strain ATCC 11503 / CBS 2605 / JCM 1781 / NBRC 1676 / NRRL YB-4239) (Yeast).